The sequence spans 101 residues: ATP synthase subunit c (101 aa).

The next 2 helical transmembrane spans lie at 35–55 (IGAG…GLIG) and 81–101 (GISE…IFVV).

This sequence belongs to the ATPase C chain family. In terms of assembly, F-type ATPases have 2 components, F(1) - the catalytic core - and F(0) - the membrane proton channel. F(1) has five subunits: alpha(3), beta(3), gamma(1), delta(1), epsilon(1). F(0) has three main subunits: a(1), b(2) and c(10-14). The alpha and beta chains form an alternating ring which encloses part of the gamma chain. F(1) is attached to F(0) by a central stalk formed by the gamma and epsilon chains, while a peripheral stalk is formed by the delta and b chains.

It localises to the cell membrane. Its function is as follows. F(1)F(0) ATP synthase produces ATP from ADP in the presence of a proton or sodium gradient. F-type ATPases consist of two structural domains, F(1) containing the extramembraneous catalytic core and F(0) containing the membrane proton channel, linked together by a central stalk and a peripheral stalk. During catalysis, ATP synthesis in the catalytic domain of F(1) is coupled via a rotary mechanism of the central stalk subunits to proton translocation. Functionally, key component of the F(0) channel; it plays a direct role in translocation across the membrane. A homomeric c-ring of between 10-14 subunits forms the central stalk rotor element with the F(1) delta and epsilon subunits. This is ATP synthase subunit c from Mycoplasma capricolum subsp. capricolum (strain California kid / ATCC 27343 / NCTC 10154).